The sequence spans 313 residues: Olfactory receptor 8C8 (313 aa).

At M1–Q27 the chain is on the extracellular side. N8 is a glycosylation site (N-linked (GlcNAc...) asparagine). A helical membrane pass occupies residues L28–L48. The Cytoplasmic segment spans residues M49–H59. The chain crosses the membrane as a helical span at residues T60–F80. Residues T81–S96 are Extracellular-facing. The chain crosses the membrane as a helical span at residues F97–V117. Cysteines 100 and 192 form a disulfide. The Cytoplasmic portion of the chain corresponds to L118–K136. A helical transmembrane segment spans residues V137–A157. Over S158–S208 the chain is Extracellular. The helical transmembrane segment at A209–I229 threads the bilayer. The Cytoplasmic segment spans residues H230–K239. The chain crosses the membrane as a helical span at residues A240 to L260. Over A261–G274 the chain is Extracellular. A helical transmembrane segment spans residues K275–L295. Over R296–S313 the chain is Cytoplasmic.

This sequence belongs to the G-protein coupled receptor 1 family. In terms of tissue distribution, expressed in neurons in the olfactory epithelium.

It is found in the cell membrane. Functionally, potential odorant receptor. This chain is Olfactory receptor 8C8, found in Mus musculus (Mouse).